A 692-amino-acid polypeptide reads, in one-letter code: Elongation factor G (692 aa).

Residues 8-282 (EKTRNIGIMA…AVLDYLPAPT (275 aa)) form the tr-type G domain. Residues 17-24 (AHIDAGKT), 81-85 (DTPGH), and 135-138 (NKMD) each bind GTP.

It belongs to the TRAFAC class translation factor GTPase superfamily. Classic translation factor GTPase family. EF-G/EF-2 subfamily.

Its subcellular location is the cytoplasm. Functionally, catalyzes the GTP-dependent ribosomal translocation step during translation elongation. During this step, the ribosome changes from the pre-translocational (PRE) to the post-translocational (POST) state as the newly formed A-site-bound peptidyl-tRNA and P-site-bound deacylated tRNA move to the P and E sites, respectively. Catalyzes the coordinated movement of the two tRNA molecules, the mRNA and conformational changes in the ribosome. The polypeptide is Elongation factor G (Bacillus velezensis (strain DSM 23117 / BGSC 10A6 / LMG 26770 / FZB42) (Bacillus amyloliquefaciens subsp. plantarum)).